The chain runs to 405 residues: MSESEQYSRNTLMDFIEYRPLDIEICDVTLRDGEQTPGVVFTKEQKLAVASELDSMGIEVIEAGFPVVSAYEKEIVKEIANQGYDSRICCLSRAVKGDVDAALDCDVDIVSIFIAMSDMHLKYKYHRTLEDMLGCAKEAIEYATDHGLNVRFAAEDASRTPIDRLKQAFKEVENEYKVQYVSLADTIGILNPTTTHYLVSEIFKCVNTSICIHCHDDLGMATANTLAAAEAGAKQLHTTVNGIGERAGNASLEEMLVALRVQYGIERYDTTKLTALSRMISEYSNITPSVNKAVVGQNAFTHESGIHVAAILEEPRTYELFLPEMVGGKRNLVVGKHTGTKALKGIINSIGFCLEREELCALIEKVKVCTDEKRRSISREQLEKLIAQVRQEQKPSASEKEKFSI.

The Pyruvate carboxyltransferase domain occupies 23–274 (IEICDVTLRD…IERYDTTKLT (252 aa)).

The protein belongs to the alpha-IPM synthase/homocitrate synthase family.

It carries out the reaction acetyl-CoA + 2-oxoglutarate + H2O = (2R)-homocitrate + CoA + H(+). The catalysed reaction is 2-oxoadipate + acetyl-CoA + H2O = (R)-dihomocitrate + CoA + H(+). The enzyme catalyses 2-oxoheptanedioate + acetyl-CoA + H2O = (R)-trihomocitrate + CoA + H(+). It functions in the pathway organic acid metabolism; 2-oxosuberate biosynthesis. Functionally, catalyzes the condensation of alpha-ketoglutarate and acetyl-CoA to form (R)-homocitrate. Can also catalyze the condensation of alpha-ketoadipate with acetyl-CoA to form (R)-homo(2)citrate, and the condensation of alpha-ketopimelate with acetyl-CoA to form (R)-homo(3)citrate. These reactions are part of the biosynthesis pathway of coenzyme B and biotin. This Methanosarcina acetivorans (strain ATCC 35395 / DSM 2834 / JCM 12185 / C2A) protein is Homocitrate synthase AksA (aksA).